The sequence spans 345 residues: Anthranilate phosphoribosyltransferase 1 (345 aa).

5-phospho-alpha-D-ribose 1-diphosphate-binding positions include G86, 89-90 (GD), T94, 96-99 (NIST), 114-122 (KHGGRGVSS), and S126. G86 provides a ligand contact to anthranilate. S98 contributes to the Mg(2+) binding site. R172 contacts anthranilate. Mg(2+) is bound by residues D231 and E232.

Belongs to the anthranilate phosphoribosyltransferase family. In terms of assembly, homodimer. The cofactor is Mg(2+).

It catalyses the reaction N-(5-phospho-beta-D-ribosyl)anthranilate + diphosphate = 5-phospho-alpha-D-ribose 1-diphosphate + anthranilate. Its pathway is amino-acid biosynthesis; L-tryptophan biosynthesis; L-tryptophan from chorismate: step 2/5. Catalyzes the transfer of the phosphoribosyl group of 5-phosphorylribose-1-pyrophosphate (PRPP) to anthranilate to yield N-(5'-phosphoribosyl)-anthranilate (PRA). The protein is Anthranilate phosphoribosyltransferase 1 of Ralstonia nicotianae (strain ATCC BAA-1114 / GMI1000) (Ralstonia solanacearum).